We begin with the raw amino-acid sequence, 375 residues long: Chaperone protein DnaJ (375 aa).

The 64-residue stretch at 5 to 68 (DYYEILGVSK…KKRAQYDQFG (64 aa)) folds into the J domain. The segment at 135–217 (GISKNINYDR…CYGKKVINER (83 aa)) adopts a CR-type zinc-finger fold. Positions 148, 151, 165, 168, 191, 194, 205, and 208 each coordinate Zn(2+). 4 CXXCXGXG motif repeats span residues 148–155 (CHKCQGTG), 165–172 (CTKCHGRG), 191–198 (CHECEGTG), and 205–212 (CEQCYGKK).

It belongs to the DnaJ family. In terms of assembly, homodimer. The cofactor is Zn(2+).

The protein resides in the cytoplasm. Participates actively in the response to hyperosmotic and heat shock by preventing the aggregation of stress-denatured proteins and by disaggregating proteins, also in an autonomous, DnaK-independent fashion. Unfolded proteins bind initially to DnaJ; upon interaction with the DnaJ-bound protein, DnaK hydrolyzes its bound ATP, resulting in the formation of a stable complex. GrpE releases ADP from DnaK; ATP binding to DnaK triggers the release of the substrate protein, thus completing the reaction cycle. Several rounds of ATP-dependent interactions between DnaJ, DnaK and GrpE are required for fully efficient folding. Also involved, together with DnaK and GrpE, in the DNA replication of plasmids through activation of initiation proteins. The protein is Chaperone protein DnaJ of Ureaplasma parvum serovar 3 (strain ATCC 700970).